Reading from the N-terminus, the 618-residue chain is Transport protein particle subunit trs85-2 (618 aa).

This sequence belongs to the TRS85 family. As to quaternary structure, part of the multisubunit TRAPP (transport protein particle) complexes I and II.

It localises to the golgi apparatus. Its subcellular location is the cis-Golgi network. Functionally, component of the TRAPP I and TRAPP II complexes. TRAPP I plays a key role in the late stages of endoplasmic reticulum to Golgi traffic. TRAPP II seems to play a role in intra-Golgi transport. Has a role late in meiosis following DNA replication. This chain is Transport protein particle subunit trs85-2 (trs85-2), found in Schizosaccharomyces pombe (strain 972 / ATCC 24843) (Fission yeast).